The primary structure comprises 126 residues: uncharacterized protein (126 aa).

2 helical membrane passes run isoleucine 40 to phenylalanine 57 and isoleucine 72 to glycine 94.

The protein localises to the cell membrane. This is an uncharacterized protein from Pasteurella multocida (strain Pm70).